The chain runs to 119 residues: Large ribosomal subunit protein bL20 (119 aa).

This sequence belongs to the bacterial ribosomal protein bL20 family.

Its function is as follows. Binds directly to 23S ribosomal RNA and is necessary for the in vitro assembly process of the 50S ribosomal subunit. It is not involved in the protein synthesizing functions of that subunit. The sequence is that of Large ribosomal subunit protein bL20 from Gluconacetobacter diazotrophicus (strain ATCC 49037 / DSM 5601 / CCUG 37298 / CIP 103539 / LMG 7603 / PAl5).